The sequence spans 246 residues: Major prion protein (246 aa).

Positions 1-15 (MLVLFVATWSDLGLC) are cleaved as a signal peptide. The interaction with GRB2, ERI3 and SYN1 stretch occupies residues 16 to 223 (KKRPKPGGWN…ESQAYYQRGS (208 aa)). Residues 18–102 (RPKPGGWNTG…HKPSKPKTSM (85 aa)) are disordered. 5 repeat units span residues 44-52 (PQGGGGWGQ), 53-60 (PHGGGWGQ), 61-68 (PHGGGWGQ), 69-76 (PHGGGWGQ), and 77-84 (PHGGGWGQ). The interval 44-84 (PQGGGGWGQPHGGGWGQPHGGGWGQPHGGGWGQPHGGGWGQ) is 5 X 8 AA tandem repeats of P-H-G-G-G-W-G-Q. Over residues 45–88 (QGGGGWGQPHGGGWGQPHGGGWGQPHGGGWGQPHGGGWGQGGGT) the composition is skewed to gly residues. 12 residues coordinate Cu(2+): His-54, Gly-55, Gly-56, His-62, Gly-63, Gly-64, His-70, Gly-71, Gly-72, His-78, Gly-79, and Gly-80. Residues 91–102 (QWHKPSKPKTSM) show a composition bias toward basic residues. A disulfide bond links Cys-172 and Cys-207. Residues Asn-174 and Asn-190 are each glycosylated (N-linked (GlcNAc...) asparagine). Ser-223 is lipidated: GPI-anchor amidated serine. A propeptide spans 224–246 (SMVLFSSPPVILLISFLIFLIVG) (removed in mature form).

Belongs to the prion family. Monomer and homodimer. Has a tendency to aggregate into amyloid fibrils containing a cross-beta spine, formed by a steric zipper of superposed beta-strands. Soluble oligomers may represent an intermediate stage on the path to fibril formation. Copper binding may promote oligomerization. Interacts with GRB2, APP, ERI3/PRNPIP and SYN1. Mislocalized cytosolically exposed PrP interacts with MGRN1; this interaction alters MGRN1 subcellular location and causes lysosomal enlargement. Interacts with KIAA1191.

The protein resides in the cell membrane. Its subcellular location is the golgi apparatus. Functionally, its primary physiological function is unclear. Has cytoprotective activity against internal or environmental stresses. May play a role in neuronal development and synaptic plasticity. May be required for neuronal myelin sheath maintenance. May play a role in iron uptake and iron homeostasis. Soluble oligomers are toxic to cultured neuroblastoma cells and induce apoptosis (in vitro). Association with GPC1 (via its heparan sulfate chains) targets PRNP to lipid rafts. Also provides Cu(2+) or Zn(2+) for the ascorbate-mediated GPC1 deaminase degradation of its heparan sulfate side chains. In Cercopithecus mona (Mona monkey), this protein is Major prion protein (PRNP).